The chain runs to 101 residues: Small ribosomal subunit protein uS17 (101 aa).

The protein belongs to the universal ribosomal protein uS17 family. Part of the 30S ribosomal subunit.

Its function is as follows. One of the primary rRNA binding proteins, it binds specifically to the 5'-end of 16S ribosomal RNA. This is Small ribosomal subunit protein uS17 from Leifsonia xyli subsp. xyli (strain CTCB07).